A 584-amino-acid polypeptide reads, in one-letter code: MCGILAVLGCSDDSQAKRVRVLELSRRLRHRGPDWSGLYQNGDNYLAHQRLAVIDPASGDQPLFNEDKTIVVTVNGEIYNHEELRKRLKNHKFRTGSDCEVIAHLYEEYGVDFVDMLDGIFSFVLLDTRDNSFMVARDAIGVTSLYIGWGLDGSVWISSEMKGLNDDCEHFETFPPGHFYSSKLGGFKQWYNPPWFNESVPSTPYEPLAIRRAFENAVIKRLMTDVPFGVLLSGGLDSSLVASITARHLAGTKAAKQWGPQLHSFCVGLEGSPDLKAGKEVAEYLGTVHHEFHFSVQDGIDAIEDVIYHVETYDVTTIRASTPMFLMSRKIKSLGVKMVLSGEGADEIFGGYLYFHKAPNKKEFHQETCRKIKALHKYDCLRANKSTSAFGLEARVPFLDKDFINTAMSLDPESKMIKPEEGRIEKWVLRRAFDDEERPYLPKHILYRQKEQFSDGVGYSWIDGLKDHAAQNVNDKMMSNAGHIFPHNTPNTKEAYYYRMIFERFFPQNSARLTVPGGATVACSTAKAVEWDASWSNNMDPSGRAAIGVHLSAYDGKNVALTIPPLKAIDNMPMMMGQGVVIQS.

Cysteine 2 functions as the For GATase activity in the catalytic mechanism. One can recognise a Glutamine amidotransferase type-2 domain in the interval cysteine 2–glycine 185. Residues arginine 50–isoleucine 54, asparagine 75–glutamate 77, and aspartate 98 contribute to the L-glutamine site. The Asparagine synthetase domain occupies proline 193–proline 516. ATP is bound by residues leucine 231, valine 267, and serine 341 to glycine 342.

It carries out the reaction L-aspartate + L-glutamine + ATP + H2O = L-asparagine + L-glutamate + AMP + diphosphate + H(+). It functions in the pathway amino-acid biosynthesis; L-asparagine biosynthesis; L-asparagine from L-aspartate (L-Gln route): step 1/1. Functionally, essential for nitrogen assimilation, distribution and remobilization within the plant via the phloem. The polypeptide is Asparagine synthetase [glutamine-hydrolyzing] 1 (ASN1) (Arabidopsis thaliana (Mouse-ear cress)).